The sequence spans 638 residues: 1-deoxy-D-xylulose-5-phosphate synthase (638 aa).

Thiamine diphosphate contacts are provided by residues H78 and 119–121 (GHS). D151 is a Mg(2+) binding site. Residues 152–153 (GA), N180, Y289, and E371 contribute to the thiamine diphosphate site. N180 lines the Mg(2+) pocket.

It belongs to the transketolase family. DXPS subfamily. In terms of assembly, homodimer. Requires Mg(2+) as cofactor. Thiamine diphosphate is required as a cofactor.

It carries out the reaction D-glyceraldehyde 3-phosphate + pyruvate + H(+) = 1-deoxy-D-xylulose 5-phosphate + CO2. It functions in the pathway metabolic intermediate biosynthesis; 1-deoxy-D-xylulose 5-phosphate biosynthesis; 1-deoxy-D-xylulose 5-phosphate from D-glyceraldehyde 3-phosphate and pyruvate: step 1/1. Catalyzes the acyloin condensation reaction between C atoms 2 and 3 of pyruvate and glyceraldehyde 3-phosphate to yield 1-deoxy-D-xylulose-5-phosphate (DXP). In Bartonella bacilliformis (strain ATCC 35685 / KC583 / Herrer 020/F12,63), this protein is 1-deoxy-D-xylulose-5-phosphate synthase.